The primary structure comprises 116 residues: Non-specific lipid-transfer protein D, cotyledon-specific isoform (116 aa).

An N-terminal signal peptide occupies residues 1-24; that stretch reads MKNIFFSVFFLLSFLLCLANVSEA. 4 disulfide bridges follow: C28-C76, C38-C53, C54-C98, and C74-C112.

Belongs to the plant LTP family.

Plant non-specific lipid-transfer proteins transfer phospholipids as well as galactolipids across membranes. May play a role in wax or cutin deposition in the cell walls of expanding epidermal cells and certain secretory tissues. The protein is Non-specific lipid-transfer protein D, cotyledon-specific isoform of Ricinus communis (Castor bean).